We begin with the raw amino-acid sequence, 423 residues long: UDP-N-acetylglucosamine 1-carboxyvinyltransferase 2 (423 aa).

Phosphoenolpyruvate is bound at residue 23-24 (KN). R93 lines the UDP-N-acetyl-alpha-D-glucosamine pocket. The active-site Proton donor is C117. C117 is modified (2-(S-cysteinyl)pyruvic acid O-phosphothioketal). UDP-N-acetyl-alpha-D-glucosamine is bound by residues 122-126 (RPIDQ), D305, and I327.

Belongs to the EPSP synthase family. MurA subfamily.

It is found in the cytoplasm. It carries out the reaction phosphoenolpyruvate + UDP-N-acetyl-alpha-D-glucosamine = UDP-N-acetyl-3-O-(1-carboxyvinyl)-alpha-D-glucosamine + phosphate. Its pathway is cell wall biogenesis; peptidoglycan biosynthesis. Its function is as follows. Cell wall formation. Adds enolpyruvyl to UDP-N-acetylglucosamine. This Listeria innocua serovar 6a (strain ATCC BAA-680 / CLIP 11262) protein is UDP-N-acetylglucosamine 1-carboxyvinyltransferase 2.